Reading from the N-terminus, the 66-residue chain is Large ribosomal subunit protein bL35 (66 aa).

2 stretches are compositionally biased toward basic residues: residues 1–15 and 28–45; these read MPKL…KRFK and TKRH…RTRR. The interval 1-49 is disordered; that stretch reads MPKLKTKSSAKKRFKVTASGRVMSAQSTKRHGMTKRSKRSLRTRRGIAQ.

The protein belongs to the bacterial ribosomal protein bL35 family.

The sequence is that of Large ribosomal subunit protein bL35 from Anaplasma marginale (strain Florida).